Here is a 119-residue protein sequence, read N- to C-terminus: DNA-binding protein Maeo_0998 (119 aa).

Residues 1–11 (MDIEEIKRQKM) are compositionally biased toward basic and acidic residues. Residues 1–36 (MDIEEIKRQKMMELQQQQAQGAPNPEEIQQQQEQER) form a disordered region. The segment covering 15 to 32 (QQQQAQGAPNPEEIQQQQ) has biased composition (low complexity).

This sequence belongs to the PDCD5 family.

The polypeptide is DNA-binding protein Maeo_0998 (Methanococcus aeolicus (strain ATCC BAA-1280 / DSM 17508 / OCM 812 / Nankai-3)).